Here is a 319-residue protein sequence, read N- to C-terminus: Putrescine hydroxycinnamoyltransferase 2 (319 aa).

Residues H160 and D301 each act as proton acceptor in the active site.

The protein belongs to the plant acyltransferase family.

Hydroxycinnamoyl transferase that catalyzes the transfer of an acyl from p-coumaryol-CoA to putrescine, to produce coumaroyl putrescine. This chain is Putrescine hydroxycinnamoyltransferase 2, found in Oryza sativa subsp. japonica (Rice).